The primary structure comprises 161 residues: Globin CTT-VIIB-3 (161 aa).

A signal peptide spans 1–16; it reads MKFFAVLALCIVGAIA. Residues 18 to 161 form the Globin domain; sequence PLTADEASLV…NTYAIVVPRL (144 aa). Heme b contacts are provided by His76 and His111.

This sequence belongs to the globin family. As to quaternary structure, homodimer.

The protein is Globin CTT-VIIB-3 (CTT-7B3) of Chironomus thummi thummi (Midge).